The chain runs to 301 residues: Glutamyl-Q tRNA(Asp) synthetase (301 aa).

Residues 8–12 (RFAPS) and E44 each bind L-glutamate. Residues 11–21 (PSPTGPLHFGS) carry the 'HIGH' region motif. Zn(2+)-binding residues include C100, C102, Y122, and C126. L-glutamate is bound by residues Y180 and R198. The 'KMSKS' region signature appears at 236 to 240 (KLSKQ). ATP is bound at residue K239.

It belongs to the class-I aminoacyl-tRNA synthetase family. GluQ subfamily. Requires Zn(2+) as cofactor.

Its function is as follows. Catalyzes the tRNA-independent activation of glutamate in presence of ATP and the subsequent transfer of glutamate onto a tRNA(Asp). Glutamate is transferred on the 2-amino-5-(4,5-dihydroxy-2-cyclopenten-1-yl) moiety of the queuosine in the wobble position of the QUC anticodon. In Dechloromonas aromatica (strain RCB), this protein is Glutamyl-Q tRNA(Asp) synthetase.